The sequence spans 560 residues: Arginine--tRNA ligase (560 aa).

The 'HIGH' region signature appears at 121-131 (PNIAKPFSMGH).

It belongs to the class-I aminoacyl-tRNA synthetase family. In terms of assembly, monomer.

It localises to the cytoplasm. The catalysed reaction is tRNA(Arg) + L-arginine + ATP = L-arginyl-tRNA(Arg) + AMP + diphosphate. The chain is Arginine--tRNA ligase from Exiguobacterium sp. (strain ATCC BAA-1283 / AT1b).